Consider the following 449-residue polypeptide: Glucose-6-phosphate isomerase (449 aa).

The active-site Proton donor is the Glu291. Residues His312 and Lys426 contribute to the active site.

This sequence belongs to the GPI family.

It is found in the cytoplasm. The enzyme catalyses alpha-D-glucose 6-phosphate = beta-D-fructose 6-phosphate. The protein operates within carbohydrate biosynthesis; gluconeogenesis. Its pathway is carbohydrate degradation; glycolysis; D-glyceraldehyde 3-phosphate and glycerone phosphate from D-glucose: step 2/4. In terms of biological role, catalyzes the reversible isomerization of glucose-6-phosphate to fructose-6-phosphate. This is Glucose-6-phosphate isomerase from Streptococcus pyogenes serotype M49 (strain NZ131).